The primary structure comprises 433 residues: Adenylosuccinate synthetase (433 aa).

GTP contacts are provided by residues 18 to 24 (GDEGKGK) and 46 to 48 (GHT). The active-site Proton acceptor is D19. The Mg(2+) site is built by D19 and G46. Residues 19 to 22 (DEGK), 44 to 47 (NAGH), T136, R150, Q229, T244, and R308 contribute to the IMP site. H47 functions as the Proton donor in the catalytic mechanism. 304–310 (VTTKRMR) is a binding site for substrate. GTP-binding positions include R310, 336-338 (KID), and 420-422 (GTG).

The protein belongs to the adenylosuccinate synthetase family. As to quaternary structure, homodimer. The cofactor is Mg(2+).

Its subcellular location is the cytoplasm. The catalysed reaction is IMP + L-aspartate + GTP = N(6)-(1,2-dicarboxyethyl)-AMP + GDP + phosphate + 2 H(+). It functions in the pathway purine metabolism; AMP biosynthesis via de novo pathway; AMP from IMP: step 1/2. Functionally, plays an important role in the de novo pathway and in the salvage pathway of purine nucleotide biosynthesis. Catalyzes the first committed step in the biosynthesis of AMP from IMP. In Schistosoma japonicum (Blood fluke), this protein is Adenylosuccinate synthetase.